Consider the following 386-residue polypeptide: Cystathionine gamma-synthase (386 aa).

Residue Lys198 is modified to N6-(pyridoxal phosphate)lysine.

The protein belongs to the trans-sulfuration enzymes family. Homotetramer. Pyridoxal 5'-phosphate is required as a cofactor.

Its subcellular location is the cytoplasm. It carries out the reaction O-succinyl-L-homoserine + L-cysteine = L,L-cystathionine + succinate + H(+). It functions in the pathway amino-acid biosynthesis; L-methionine biosynthesis via de novo pathway; L-cystathionine from O-succinyl-L-homoserine: step 1/1. Its function is as follows. Catalyzes the formation of L-cystathionine from O-succinyl-L-homoserine (OSHS) and L-cysteine, via a gamma-replacement reaction. In the absence of thiol, catalyzes gamma-elimination to form 2-oxobutanoate, succinate and ammonia. The polypeptide is Cystathionine gamma-synthase (metB) (Escherichia coli (strain K12)).